A 439-amino-acid polypeptide reads, in one-letter code: Glucose-1-phosphate adenylyltransferase (439 aa).

Alpha-D-glucose 1-phosphate-binding positions include Tyr122, Gly187, 202–203 (EK), and Ser220.

Belongs to the bacterial/plant glucose-1-phosphate adenylyltransferase family. Homotetramer.

The enzyme catalyses alpha-D-glucose 1-phosphate + ATP + H(+) = ADP-alpha-D-glucose + diphosphate. Its pathway is glycan biosynthesis; glycogen biosynthesis. Involved in the biosynthesis of ADP-glucose, a building block required for the elongation reactions to produce glycogen. Catalyzes the reaction between ATP and alpha-D-glucose 1-phosphate (G1P) to produce pyrophosphate and ADP-Glc. The sequence is that of Glucose-1-phosphate adenylyltransferase from Thiobacillus denitrificans (strain ATCC 25259 / T1).